The chain runs to 272 residues: Acyl-[acyl-carrier-protein]--UDP-N-acetylglucosamine O-acyltransferase (272 aa).

This sequence belongs to the transferase hexapeptide repeat family. LpxA subfamily. In terms of assembly, homotrimer.

It localises to the cytoplasm. It catalyses the reaction a (3R)-hydroxyacyl-[ACP] + UDP-N-acetyl-alpha-D-glucosamine = a UDP-3-O-[(3R)-3-hydroxyacyl]-N-acetyl-alpha-D-glucosamine + holo-[ACP]. It functions in the pathway glycolipid biosynthesis; lipid IV(A) biosynthesis; lipid IV(A) from (3R)-3-hydroxytetradecanoyl-[acyl-carrier-protein] and UDP-N-acetyl-alpha-D-glucosamine: step 1/6. In terms of biological role, involved in the biosynthesis of lipid A, a phosphorylated glycolipid that anchors the lipopolysaccharide to the outer membrane of the cell. The sequence is that of Acyl-[acyl-carrier-protein]--UDP-N-acetylglucosamine O-acyltransferase from Rhizobium etli (strain ATCC 51251 / DSM 11541 / JCM 21823 / NBRC 15573 / CFN 42).